A 421-amino-acid polypeptide reads, in one-letter code: MEKMHITNQEHDAFVKSHPNGDLLQLTKWAETKKLTGWYARRIAVGRDGEVQGVAQLLFKKVPKLPYTLCYISRGFVVDYSNKEALNALLDSAKEIAKAEKTYAIKIDPDVEVDKGTDALQNLKALGFKHKGFKEGLSKDYIQPRMTMITPIDKNDDELLNSFERRNRSKVRLALKRGTTVERSDREGLKTFAELMKITGERDGFLTRDISYFENIYDALHEDGDAELFLVKLDPKENIAKVNQELNELHAEIAKWQQKMKTSEKQAKKAQNMINDAQNKIAKNEDLKRDLEALEKEHPEGIYLSGALLMFAGSKSYYLYGASSNEFRDFLPNHHMQYTMMKYAREHGATTYDFGGTDNDPDKDSEHYGLWAFKKVWGTYLSEKIGEFDYVLNQPLYQLIEQVKPRLTKAKIKISRKLKRK.

The protein belongs to the FemABX family. As to quaternary structure, monomer.

It localises to the cytoplasm. It catalyses the reaction beta-D-GlcNAc-(1-&gt;4)-Mur2Ac(oyl-L-Ala-D-isoglutaminyl-L-Lys-D-Ala-D-Ala)-di-trans,octa-cis-undecaprenyl diphosphate + glycyl-tRNA(Gly) = beta-D-GlcNAc-(1-&gt;4)-Mur2Ac(oyl-L-Ala-D-isoglutaminyl-L-Lys-(N(6)-Gly)-D-Ala-D-Ala)-di-trans,octa-cis-undecaprenyl diphosphate + tRNA(Gly) + H(+). In terms of biological role, catalyzes the incorporation of the first glycine of the pentaglycine interpeptide bridge, which is characteristic of the S.aureus peptidoglycan. This glycine is added to the epsilon-amino group of the L-lysine of the membrane-bound lipid II intermediate (GlcNAc-(beta-1,4)-N-acetylmuramic acid(-L-Ala-D-iGln-L-Lys-D-Ala-D-Ala)-pyrophosphoryl-undecaprenol), using glycyl-tRNA(Gly) as donor, in a ribosome-independent mechanism. Involved in methicillin resistance. This chain is Lipid II:glycine glycyltransferase (femX), found in Staphylococcus aureus (strain COL).